The following is a 143-amino-acid chain: Transcription antitermination protein NusB (143 aa).

Belongs to the NusB family.

Its function is as follows. Involved in transcription antitermination. Required for transcription of ribosomal RNA (rRNA) genes. Binds specifically to the boxA antiterminator sequence of the ribosomal RNA (rrn) operons. This chain is Transcription antitermination protein NusB, found in Clostridium botulinum (strain ATCC 19397 / Type A).